Reading from the N-terminus, the 1854-residue chain is Dystrophin, isoform D (1854 aa).

Disordered regions lie at residues 1 to 65 (MTTT…PIYA), 84 to 161 (GSTT…YEMP), 240 to 352 (QSPT…MSPA), 516 to 548 (LKPT…PTPS), 595 to 650 (TPGG…TSES), 716 to 740 (VMSK…PSTA), 783 to 830 (LKLQ…STTP), and 1012 to 1036 (VSDT…EQSR). Composition is skewed to low complexity over residues 11–37 (QRQQ…QQHQ) and 84–96 (GSTT…LQSS). Positions 143-157 (GLSSAQPATSASSGN) are enriched in polar residues. A compositionally biased stretch (low complexity) spans 276–296 (QQQQQQQQAGINGQINGNGNQ). Polar residues-rich tracts occupy residues 331 to 345 (TLSR…SSAD) and 518 to 536 (PTST…SNTA). Positions 595 to 606 (TPGGGVVGGQAA) are enriched in gly residues. Residues 716–727 (VMSKSNSSLGSV) show a composition bias toward polar residues. 2 stretches are compositionally biased toward low complexity: residues 728–740 (TTPS…PSTA) and 783–814 (LKLQ…QQIQ). Residues 815–830 (NGFASDDNSSSCSTTP) are compositionally biased toward polar residues. Spectrin repeat units follow at residues 936–1069 (EHWN…RLDE) and 1072–1176 (TKMR…VLCQ). A disordered region spans residues 1179–1209 (AQQTHENGDDGRTTSNSGTIGPLPNLGQSVK). The 34-residue stretch at 1206–1239 (QSVKPPWERATTAANVPYYIDHERETTHWDHPEM) folds into the WW domain. A ZZ-type zinc finger spans residues 1464–1520 (KHQAKCNICKEYPIVGFRYRCLKCFNFDMCQKCFFFGRNAKNHKLTHPMHEYCTTTT). Cys1469, Cys1472, Cys1484, Cys1487, Cys1493, Cys1496, His1506, and His1510 together coordinate Zn(2+). Ser1564 bears the Phosphoserine mark. 2 disordered regions span residues 1673–1701 (EQSG…GEQG) and 1744–1854 (DEPN…ELQK). Composition is skewed to polar residues over residues 1682-1694 (NGMQ…MTGL) and 1765-1796 (ALNS…QQNG). Positions 1815 to 1826 (QELESINDDLED) are enriched in acidic residues. The segment covering 1827–1845 (SSSSNTTNTTTTTTTTATT) has biased composition (low complexity).

In terms of assembly, component of the dystrophin associated protein complex (DAPC). Interacts with Dg, via the Dg WW domain binding sites. As to expression, during embryogenesis and in third instar larvae, expression is seen in pericardial cells of the dorsal vessel and in the ventral nerve cord. Expression is absent from both the embryonic and larval musculature.

It is found in the cell membrane. The protein localises to the sarcolemma. Its subcellular location is the cytoplasm. It localises to the cytoskeleton. Required for the maintenance of appropriate synaptic retrograde communication and the stabilization of muscle cell architecture or physiology. May play a role in anchoring the cytoskeleton to the plasma membrane. The sequence is that of Dystrophin, isoform D (Dys) from Drosophila melanogaster (Fruit fly).